The following is a 1270-amino-acid chain: Activating transcription factor 7-interacting protein 1 (1270 aa).

Met1 bears the N-acetylmethionine mark. Residue Lys33 forms a Glycyl lysine isopeptide (Lys-Gly) (interchain with G-Cter in SUMO2) linkage. Ser57 and Ser113 each carry phosphoserine. Disordered regions lie at residues 104–223 and 235–402; these read DDDL…ISGD and TSVD…EDET. Thr118 is modified (phosphothreonine). Low complexity-rich tracts occupy residues 132–203 and 248–269; these read GDPA…SSGD and DPAS…SDDL. Basic and acidic residues-rich tracts occupy residues 310–327 and 333–343; these read SNKD…EKLE and DSLDEKNKADN. Residues 347 to 356 show a composition bias toward acidic residues; it reads ANEETLETDD. Basic and acidic residues predominate over residues 363-373; sequence RPPENEKKVEE. Phosphoserine occurs at positions 445, 473, 474, 477, 479, and 496. Disordered stretches follow at residues 455-570, 658-685, 822-862, and 886-906; these read TSLL…SKRR, EDLK…NSNN, PPTV…PTAS, and RTSL…NRGP. Polar residues predominate over residues 474–486; that stretch reads SFGSPSKQESSES. Acidic residues predominate over residues 496 to 509; that stretch reads SDEEDISGEKDESE. Positions 524–552 are enriched in basic and acidic residues; it reads SNEKDNKPEEEEQVIHEDDERPSEKNEFS. The short motif at 553 to 571 is the Nuclear localization signal element; the sequence is RRKRSKSEDMDNVQSKRRR. Lys558 is covalently cross-linked (Glycyl lysine isopeptide (Lys-Gly) (interchain with G-Cter in SUMO2)). Ser559 carries the post-translational modification Phosphoserine. The interaction with SETDB1 stretch occupies residues 562–817; that stretch reads MDNVQSKRRR…NQPSGNVEFI (256 aa). A coiled-coil region spans residues 617–665; it reads KTLAELKTRVEKIECNKRHKTVLTELQAKIARLTKRFEAAKEDLKKRHE. A Phosphoserine modification is found at Ser673. Polar residues predominate over residues 822-834; it reads PPTVSGLTKNPVS. Residues 843-854 are compositionally biased toward low complexity; it reads KPNNVPSVPSPS. Ser899 carries the post-translational modification Phosphoserine. Glycyl lysine isopeptide (Lys-Gly) (interchain with G-Cter in SUMO2) cross-links involve residues Lys910 and Lys938. 2 stretches are compositionally biased toward polar residues: residues 918–942 and 950–964; these read TSSA…TIDA and DSTS…SDSS. Disordered stretches follow at residues 918 to 1026 and 1115 to 1160; these read TSSA…SQTT and STGP…STSL. The interaction with SUMO stretch occupies residues 965–975; sequence GVIDLTMDDEE. 2 stretches are compositionally biased toward polar residues: residues 988-999 and 1016-1026; these read TPVSTMSSSQPV and GVPTSGPSQTT. Pro residues predominate over residues 1134–1151; that stretch reads PRPVHPAPLPEAPQPQRL. The tract at residues 1154–1270 is interaction with MBD1; sequence EAASTSLPQK…TDVISSTQSS (117 aa). Residues 1160 to 1270 enclose the Fibronectin type-III domain; the sequence is LPQKPHLKLA…TDVISSTQSS (111 aa).

The protein belongs to the MCAF family. Interacts with MBD1; the interaction is enhanced when MBD1 is sumoylated. Interacts with SETDB1; the interaction protects SETDB1 from proteasomal degradation and is required to stimulate histone methyltransferase activity and facilitate the conversion of dimethylated to trimethylated H3 'Lys-9'. Interacts with SUMO ubiquitin-like proteins (SUMO1, SUNO2 and SUMO3), with a preference for SUMO2 and SUMO3. Interacts with SP1, ATF7 and ZHX1. Interacts with the general transcription machinery, including ERCC2, ERCC3, GTF2E1, GTF2E2 and POLR2A. In terms of assembly, (Microbial infection) Interacts with Epstein-Barr virus BRLF1/Rta protein, leading to the regulation of host genes in Epstein-Barr virus-infected cells. In terms of tissue distribution, detected at low levels in breast, lung and stomach; highly up-regulated in the corresponding cancerous tissues (at protein level).

It localises to the nucleus. Functionally, recruiter that couples transcriptional factors to general transcription apparatus and thereby modulates transcription regulation and chromatin formation. Can both act as an activator or a repressor depending on the context. Required for HUSH-mediated heterochromatin formation and gene silencing. Mediates MBD1-dependent transcriptional repression, probably by recruiting complexes containing SETDB1. Stabilizes SETDB1, is required to stimulate histone methyltransferase activity of SETDB1 and facilitates the conversion of dimethylated to trimethylated H3 'Lys-9' (H3K9me3). The complex formed with MBD1 and SETDB1 represses transcription and couples DNA methylation and histone H3 'Lys-9' trimethylation (H3K9me3). Facilitates telomerase TERT and TERC gene expression by SP1 in cancer cells. The chain is Activating transcription factor 7-interacting protein 1 from Homo sapiens (Human).